We begin with the raw amino-acid sequence, 206 residues long: Small ribosomal subunit protein uS4B (206 aa).

Residues 96–156 (GRLDNVVYRM…EKAKKQSRIG (61 aa)) enclose the S4 RNA-binding domain.

The protein belongs to the universal ribosomal protein uS4 family. As to quaternary structure, part of the 30S ribosomal subunit. Contacts protein S5. The interaction surface between S4 and S5 is involved in control of translational fidelity.

One of the primary rRNA binding proteins, it binds directly to 16S rRNA where it nucleates assembly of the body of the 30S subunit. In terms of biological role, with S5 and S12 plays an important role in translational accuracy. The chain is Small ribosomal subunit protein uS4B from Psychromonas ingrahamii (strain DSM 17664 / CCUG 51855 / 37).